A 237-amino-acid chain; its full sequence is LexA repressor (237 aa).

Positions 26 to 46 (FDEMKIALELTSKSGIHRLIT) form a DNA-binding region, H-T-H motif. Catalysis depends on for autocatalytic cleavage activity residues S158 and K196.

It belongs to the peptidase S24 family. Homodimer.

The catalysed reaction is Hydrolysis of Ala-|-Gly bond in repressor LexA.. Functionally, represses a number of genes involved in the response to DNA damage (SOS response), including recA and lexA. In the presence of single-stranded DNA, RecA interacts with LexA causing an autocatalytic cleavage which disrupts the DNA-binding part of LexA, leading to derepression of the SOS regulon and eventually DNA repair. The chain is LexA repressor from Bartonella quintana (strain Toulouse) (Rochalimaea quintana).